The primary structure comprises 126 residues: DNA-directed RNA polymerase subunit omega (126 aa).

This sequence belongs to the RNA polymerase subunit omega family. As to quaternary structure, the RNAP catalytic core consists of 2 alpha, 1 beta, 1 beta' and 1 omega subunit. When a sigma factor is associated with the core the holoenzyme is formed, which can initiate transcription.

It carries out the reaction RNA(n) + a ribonucleoside 5'-triphosphate = RNA(n+1) + diphosphate. Functionally, promotes RNA polymerase assembly. Latches the N- and C-terminal regions of the beta' subunit thereby facilitating its interaction with the beta and alpha subunits. In Rickettsia felis (strain ATCC VR-1525 / URRWXCal2) (Rickettsia azadi), this protein is DNA-directed RNA polymerase subunit omega.